The primary structure comprises 369 residues: Nuclear pore complex-interacting protein family member A7 (369 aa).

Positions 151-171 are disordered; that stretch reads SMKEREHREEERQVSEAEENG.

It belongs to the NPIP family.

The polypeptide is Nuclear pore complex-interacting protein family member A7 (NPIPA7) (Homo sapiens (Human)).